A 157-amino-acid polypeptide reads, in one-letter code: DNA gyrase inhibitor 2 (157 aa).

Belongs to the DNA gyrase inhibitor family. Interacts with DNA gyrase.

It localises to the cytoplasm. Its function is as follows. Inhibits the supercoiling activity of DNA gyrase. Acts by inhibiting DNA gyrase at an early step, prior to (or at the step of) binding of DNA by the gyrase. It protects cells against toxins that target DNA gyrase, by inhibiting activity of these toxins and reducing the formation of lethal double-strand breaks in the cell. In Dickeya dadantii (strain 3937) (Erwinia chrysanthemi (strain 3937)), this protein is DNA gyrase inhibitor 2.